A 356-amino-acid chain; its full sequence is Phosphoserine aminotransferase (356 aa).

Arg41 is a binding site for L-glutamate. Residues 75–76, Trp100, Thr147, Asp166, and Gln189 each bind pyridoxal 5'-phosphate; that span reads AT. Residue Lys190 is modified to N6-(pyridoxal phosphate)lysine. 227–228 contributes to the pyridoxal 5'-phosphate binding site; it reads NT.

It belongs to the class-V pyridoxal-phosphate-dependent aminotransferase family. SerC subfamily. In terms of assembly, homodimer. It depends on pyridoxal 5'-phosphate as a cofactor.

Its subcellular location is the cytoplasm. The enzyme catalyses O-phospho-L-serine + 2-oxoglutarate = 3-phosphooxypyruvate + L-glutamate. It catalyses the reaction 4-(phosphooxy)-L-threonine + 2-oxoglutarate = (R)-3-hydroxy-2-oxo-4-phosphooxybutanoate + L-glutamate. Its pathway is amino-acid biosynthesis; L-serine biosynthesis; L-serine from 3-phospho-D-glycerate: step 2/3. In terms of biological role, catalyzes the reversible conversion of 3-phosphohydroxypyruvate to phosphoserine and of 3-hydroxy-2-oxo-4-phosphonooxybutanoate to phosphohydroxythreonine. The polypeptide is Phosphoserine aminotransferase (Exiguobacterium sp. (strain ATCC BAA-1283 / AT1b)).